The sequence spans 90 residues: Small ribosomal subunit protein uS15c (90 aa).

Residues 1–11 (MVKNSFSSVIS) are compositionally biased toward polar residues. A disordered region spans residues 1–20 (MVKNSFSSVISQEEKKENGG).

The protein belongs to the universal ribosomal protein uS15 family. Part of the 30S ribosomal subunit.

The protein resides in the plastid. Its subcellular location is the chloroplast. This is Small ribosomal subunit protein uS15c (rps15) from Cucumis sativus (Cucumber).